A 1226-amino-acid polypeptide reads, in one-letter code: DNA-directed RNA polymerase subunit beta'' (1226 aa).

Residues cysteine 223, cysteine 297, cysteine 304, and cysteine 307 each contribute to the Zn(2+) site.

It belongs to the RNA polymerase beta' chain family. RpoC2 subfamily. As to quaternary structure, in plastids the minimal PEP RNA polymerase catalytic core is composed of four subunits: alpha, beta, beta', and beta''. When a (nuclear-encoded) sigma factor is associated with the core the holoenzyme is formed, which can initiate transcription. Zn(2+) is required as a cofactor.

It localises to the plastid. It is found in the chloroplast. It catalyses the reaction RNA(n) + a ribonucleoside 5'-triphosphate = RNA(n+1) + diphosphate. DNA-dependent RNA polymerase catalyzes the transcription of DNA into RNA using the four ribonucleoside triphosphates as substrates. The protein is DNA-directed RNA polymerase subunit beta'' of Pyropia yezoensis (Susabi-nori).